Reading from the N-terminus, the 317-residue chain is MRVLWVALVVTLLAGCRTEDEPGPPPEVHVWWEESKWQGSQPWEQALGRFWDYLRWVQSLSDQVQEELLSTKVTQELTELIEESMKEVKAYREELEAQLGPVTQETQARLSKELQAAQARVGADMEDVRNRLVLYRSEVHNMLGQTTEELRSRLASHLRNVRKRLVRDTEDLQKRLAVYQAGLREGAERSVSALRERLGPLVEQGRLRAATLSTRAGQPLRERAEAWGQKLRGRLEEMGSRTRDRLDEMRDELEEVRTKVEEQGSQLRLQAEAFQARLKGWFEPLVEDMRRQWAGLVERMQSAVSISSSTSAPSDNQ.

A signal peptide spans 1 to 18 (MRVLWVALVVTLLAGCRT). 8 repeat units span residues 79–100 (ELIE…AQLG), 101–122 (PVTQ…ARVG), 123–144 (ADME…NMLG), 145–166 (QTTE…KRLV), 167–188 (RDTE…EGAE), 189–210 (RSVS…LRAA), 211–232 (TLST…QKLR), and 233–254 (GRLE…DELE). The 8 X 22 AA approximate tandem repeats stretch occupies residues 79–254 (ELIEESMKEV…RLDEMRDELE (176 aa)). Met142 carries the post-translational modification Methionine sulfoxide. The LDL and other lipoprotein receptors binding stretch occupies residues 157–167 (HLRNVRKRLVR). 161-164 (VRKR) contacts heparin. The interval 209-289 (AATLSTRAGQ…GWFEPLVEDM (81 aa)) is lipid-binding and lipoprotein association. 228–235 (GQKLRGRL) serves as a coordination point for heparin. Residues 265 to 317 (SQLRLQAEAFQARLKGWFEPLVEDMRRQWAGLVERMQSAVSISSSTSAPSDNQ) form a homooligomerization region. The specificity for association with VLDL stretch occupies residues 277 to 289 (RLKGWFEPLVEDM).

The protein belongs to the apolipoprotein A1/A4/E family. Homotetramer. May interact with ABCA1; functionally associated with ABCA1 in the biogenesis of HDLs. May interact with APP/A4 amyloid-beta peptide; the interaction is extremely stable in vitro but its physiological significance is unclear. May interact with MAPT. May interact with MAP2. In the cerebrospinal fluid, interacts with secreted SORL1. Interacts with PMEL; this allows the loading of PMEL luminal fragment on ILVs to induce fibril nucleation. Post-translationally, APOE exists as multiple glycosylated and sialylated glycoforms within cells and in plasma. The extent of glycosylation and sialylation are tissue and context specific. Glycated in plasma VLDL. In terms of processing, phosphorylated by FAM20C in the extracellular medium.

It localises to the secreted. Its subcellular location is the extracellular space. It is found in the extracellular matrix. The protein resides in the extracellular vesicle. The protein localises to the endosome. It localises to the multivesicular body. APOE is an apolipoprotein, a protein associating with lipid particles, that mainly functions in lipoprotein-mediated lipid transport between organs via the plasma and interstitial fluids. APOE is a core component of plasma lipoproteins and is involved in their production, conversion and clearance. Apolipoproteins are amphipathic molecules that interact both with lipids of the lipoprotein particle core and the aqueous environment of the plasma. As such, APOE associates with chylomicrons, chylomicron remnants, very low density lipoproteins (VLDL) and intermediate density lipoproteins (IDL) but shows a preferential binding to high-density lipoproteins (HDL). It also binds a wide range of cellular receptors including the LDL receptor/LDLR and the very low-density lipoprotein receptor/VLDLR that mediate the cellular uptake of the APOE-containing lipoprotein particles. Finally, APOE also has a heparin-binding activity and binds heparan-sulfate proteoglycans on the surface of cells, a property that supports the capture and the receptor-mediated uptake of APOE-containing lipoproteins by cells. This Sus scrofa (Pig) protein is Apolipoprotein E (APOE).